Consider the following 291-residue polypeptide: Ribose-phosphate pyrophosphokinase (291 aa).

ATP-binding positions include 34–36 and 93–94; these read DGE and RQ. Mg(2+) is bound by residues H127 and D165. K188 is an active-site residue. D-ribose 5-phosphate is bound by residues R190, D216, and 220–224; that span reads STGGT.

The protein belongs to the ribose-phosphate pyrophosphokinase family. Class III (archaeal) subfamily. Mg(2+) serves as cofactor.

The protein resides in the cytoplasm. The catalysed reaction is D-ribose 5-phosphate + ATP = 5-phospho-alpha-D-ribose 1-diphosphate + AMP + H(+). Its pathway is metabolic intermediate biosynthesis; 5-phospho-alpha-D-ribose 1-diphosphate biosynthesis; 5-phospho-alpha-D-ribose 1-diphosphate from D-ribose 5-phosphate (route I): step 1/1. Involved in the biosynthesis of the central metabolite phospho-alpha-D-ribosyl-1-pyrophosphate (PRPP) via the transfer of pyrophosphoryl group from ATP to 1-hydroxyl of ribose-5-phosphate (Rib-5-P). The sequence is that of Ribose-phosphate pyrophosphokinase from Sulfolobus acidocaldarius (strain ATCC 33909 / DSM 639 / JCM 8929 / NBRC 15157 / NCIMB 11770).